The chain runs to 123 residues: Ribonuclease P protein component (123 aa).

This sequence belongs to the RnpA family. As to quaternary structure, consists of a catalytic RNA component (M1 or rnpB) and a protein subunit.

The enzyme catalyses Endonucleolytic cleavage of RNA, removing 5'-extranucleotides from tRNA precursor.. Its function is as follows. RNaseP catalyzes the removal of the 5'-leader sequence from pre-tRNA to produce the mature 5'-terminus. It can also cleave other RNA substrates such as 4.5S RNA. The protein component plays an auxiliary but essential role in vivo by binding to the 5'-leader sequence and broadening the substrate specificity of the ribozyme. The sequence is that of Ribonuclease P protein component from Streptococcus pneumoniae serotype 4 (strain ATCC BAA-334 / TIGR4).